Consider the following 186-residue polypeptide: Probable chorismate pyruvate-lyase (186 aa).

3 residues coordinate substrate: arginine 80, leucine 118, and glutamate 170.

The protein belongs to the UbiC family.

It is found in the cytoplasm. The catalysed reaction is chorismate = 4-hydroxybenzoate + pyruvate. The protein operates within cofactor biosynthesis; ubiquinone biosynthesis. Removes the pyruvyl group from chorismate, with concomitant aromatization of the ring, to provide 4-hydroxybenzoate (4HB) for the ubiquinone pathway. In Pseudomonas syringae pv. tomato (strain ATCC BAA-871 / DC3000), this protein is Probable chorismate pyruvate-lyase.